The chain runs to 364 residues: Mannose-1-phosphate guanyltransferase (364 aa).

Belongs to the transferase hexapeptide repeat family.

Its subcellular location is the cytoplasm. It catalyses the reaction alpha-D-mannose 1-phosphate + GTP + H(+) = GDP-alpha-D-mannose + diphosphate. It participates in nucleotide-sugar biosynthesis; GDP-alpha-D-mannose biosynthesis; GDP-alpha-D-mannose from alpha-D-mannose 1-phosphate (GTP route): step 1/1. Its function is as follows. Involved in cell wall synthesis where it is required for glycosylation. Involved in cell cycle progression through cell-size checkpoint. In Aspergillus fumigatus (strain ATCC MYA-4609 / CBS 101355 / FGSC A1100 / Af293) (Neosartorya fumigata), this protein is Mannose-1-phosphate guanyltransferase (mpg1).